An 89-amino-acid polypeptide reads, in one-letter code: Small ribosomal subunit protein uS15 (89 aa).

It belongs to the universal ribosomal protein uS15 family. In terms of assembly, part of the 30S ribosomal subunit. Forms a bridge to the 50S subunit in the 70S ribosome, contacting the 23S rRNA.

Its function is as follows. One of the primary rRNA binding proteins, it binds directly to 16S rRNA where it helps nucleate assembly of the platform of the 30S subunit by binding and bridging several RNA helices of the 16S rRNA. Functionally, forms an intersubunit bridge (bridge B4) with the 23S rRNA of the 50S subunit in the ribosome. The chain is Small ribosomal subunit protein uS15 from Bacillus pumilus (strain SAFR-032).